A 150-amino-acid chain; its full sequence is Small ribosomal subunit protein uS11y (150 aa).

Ser-19 is modified (phosphoserine).

The protein belongs to the universal ribosomal protein uS11 family.

Its subcellular location is the cytoplasm. The chain is Small ribosomal subunit protein uS11y (RPS14B) from Arabidopsis thaliana (Mouse-ear cress).